A 31-amino-acid polypeptide reads, in one-letter code: Ranatuerin-2Ca (31 aa).

A disulfide bridge links C24 with C29.

Expressed by the skin glands.

The protein localises to the secreted. In terms of biological role, antibacterial activity against Gram-positive bacterium S.aureus and Gram-negative bacterium E.coli. Has activity against C.albicans. This Lithobates clamitans (Green frog) protein is Ranatuerin-2Ca.